The primary structure comprises 553 residues: Peroxiredoxin-2A (553 aa).

One can recognise a Thioredoxin domain in the interval 4-160; sequence IDVGDFVPDG…LMKMTTTTMS (157 aa). Catalysis depends on Cys-51, which acts as the Cysteine sulfenic acid (-SOH) intermediate. One can recognise an F-box domain in the interval 156-201; that stretch reads TTTMSNLPTDLLEEIISRVPRKYMRAVRLTCKRWNGMFKSQSFTKM.

It belongs to the peroxiredoxin family. Prx5 subfamily. Monomer.

It catalyses the reaction [glutaredoxin]-dithiol + a hydroperoxide = [glutaredoxin]-disulfide + an alcohol + H2O. Functionally, thiol-specific peroxidase that catalyzes the reduction of hydrogen peroxide and organic hydroperoxides to water and alcohols, respectively. Plays a role in cell protection against oxidative stress by detoxifying peroxides. May be involved in intracellular redox signaling. The chain is Peroxiredoxin-2A (PRXIIA) from Arabidopsis thaliana (Mouse-ear cress).